We begin with the raw amino-acid sequence, 331 residues long: Glycine betaine/proline betaine-binding periplasmic protein (331 aa).

Positions 1–21 (MRHTVIFASAFATLVTASAFA) are cleaved as a signal peptide. Substrate contacts are provided by residues tryptophan 86, histidine 90, and 161–163 (WGC). A disulfide bond links cysteine 157 and cysteine 163.

The complex is composed of two ATP-binding proteins (ProV), two transmembrane proteins (ProW) and a solute-binding protein (ProX).

It is found in the periplasm. Part of the ProU ABC transporter complex involved in glycine betaine and proline betaine uptake. Binds glycine betaine and proline betaine with high affinity. The chain is Glycine betaine/proline betaine-binding periplasmic protein (proX) from Salmonella typhimurium (strain LT2 / SGSC1412 / ATCC 700720).